Reading from the N-terminus, the 401-residue chain is Aspartate aminotransferase, mitochondrial (401 aa).

Position 19 is a phosphothreonine (Thr19). An N6-acetyllysine modification is found at Lys30. Gly36 is a binding site for substrate. Lys44 is subject to N6-acetyllysine; alternate. An N6-succinyllysine; alternate modification is found at Lys44. Residue Lys53 is modified to N6-acetyllysine. At Lys61 the chain carries N6-acetyllysine; alternate. Lys61 is subject to N6-succinyllysine; alternate. Tyr67 bears the 3'-nitrotyrosine; alternate mark. Tyr67 bears the Phosphotyrosine; alternate mark. Residues Lys78, Lys93, and Lys130 each carry the N6-acetyllysine; alternate modification. Residues Lys78, Lys93, and Lys130 each carry the N6-succinyllysine; alternate modification. Trp133 lines the substrate pocket. N6-acetyllysine; alternate is present on Lys156. Residue Lys156 is modified to N6-succinyllysine; alternate. Asn186 serves as a coordination point for substrate. The residue at position 198 (Lys198) is an N6-succinyllysine. Lys205 bears the N6-acetyllysine mark. An N6-acetyllysine; alternate mark is found at Lys250 and Lys267. Position 250 is an N6-(pyridoxal phosphate)lysine; alternate (Lys250). The residue at position 267 (Lys267) is an N6-succinyllysine; alternate. An N6-acetyllysine modification is found at Lys273. Lys280 carries the post-translational modification N6-acetyllysine; alternate. Lys280 is subject to N6-succinyllysine; alternate. Asymmetric dimethylarginine is present on Arg284. Position 309 is an N6-acetyllysine; alternate (Lys309). Position 309 is an N6-succinyllysine; alternate (Lys309). Lys316 bears the N6-acetyllysine mark. An N6-acetyllysine; alternate modification is found at Lys334. Lys334 is modified (N6-succinyllysine; alternate). 2 positions are modified to N6-acetyllysine: Lys335 and Lys358. N6-acetyllysine; alternate is present on residues Lys367 and Lys375. 2 positions are modified to N6-succinyllysine; alternate: Lys367 and Lys375. Arg378 is a substrate binding site.

The protein belongs to the class-I pyridoxal-phosphate-dependent aminotransferase family. Homodimer. Pyridoxal 5'-phosphate serves as cofactor.

Its subcellular location is the mitochondrion matrix. It localises to the cell membrane. The catalysed reaction is L-aspartate + 2-oxoglutarate = oxaloacetate + L-glutamate. The enzyme catalyses L-kynurenine + 2-oxoglutarate = kynurenate + L-glutamate + H2O. Catalyzes the irreversible transamination of the L-tryptophan metabolite L-kynurenine to form kynurenic acid (KA). As a member of the malate-aspartate shuttle, it has a key role in the intracellular NAD(H) redox balance. Is important for metabolite exchange between mitochondria and cytosol, and for amino acid metabolism. Facilitates cellular uptake of long-chain free fatty acids. The protein is Aspartate aminotransferase, mitochondrial (GOT2) of Equus caballus (Horse).